Reading from the N-terminus, the 380-residue chain is Cystathionine beta-lyase (380 aa).

Lysine 196 carries the N6-(pyridoxal phosphate)lysine modification.

This sequence belongs to the trans-sulfuration enzymes family. Requires pyridoxal 5'-phosphate as cofactor.

The protein localises to the cytoplasm. It catalyses the reaction L,L-cystathionine + H2O = L-homocysteine + pyruvate + NH4(+). The catalysed reaction is an S-substituted L-cysteine + H2O = a thiol + pyruvate + NH4(+). It functions in the pathway amino-acid biosynthesis; L-methionine biosynthesis via de novo pathway; L-homocysteine from L-cystathionine: step 1/1. Functionally, the enzymatic degradation of amino acids in cheese is believed to generate aroma compounds and therefore to be essential for flavor development. Cystathionine beta-lyase (CBL) can convert cystathionine to homocysteine but is also able to catalyze an alpha, gamma elimination. With methionine as a substrate, it produces volatile sulfur compounds which are important for flavor formation in Gouda cheese. In Lactococcus lactis subsp. lactis (strain IL1403) (Streptococcus lactis), this protein is Cystathionine beta-lyase (metC).